The following is a 58-amino-acid chain: Large ribosomal subunit protein eL37 (58 aa).

Zn(2+) contacts are provided by C20, C23, C35, and C38. The C4-type zinc-finger motif lies at 20–38; it reads CRRCGEKSYHTKKKVCSSC.

This sequence belongs to the eukaryotic ribosomal protein eL37 family. It depends on Zn(2+) as a cofactor.

Functionally, binds to the 23S rRNA. The chain is Large ribosomal subunit protein eL37 from Haloquadratum walsbyi (strain DSM 16790 / HBSQ001).